The following is a 365-amino-acid chain: Putative nudix hydrolase 1 (365 aa).

Residues 72-201 (VNYVAAAIIL…DFIRLVDEAV (130 aa)) enclose the Nudix hydrolase domain. The short motif at 109-130 (GRVEAGETIEEAVVREVKEETG) is the Nudix box element. Residues Glu-124 and Glu-128 each contribute to the Mg(2+) site.

The protein belongs to the Nudix hydrolase family. Mg(2+) serves as cofactor. Requires Mn(2+) as cofactor.

Probably mediates the hydrolysis of some nucleoside diphosphate derivatives. The sequence is that of Putative nudix hydrolase 1 (ndx-1) from Caenorhabditis elegans.